Here is a 492-residue protein sequence, read N- to C-terminus: 2-succinylbenzoate--CoA ligase (492 aa).

Belongs to the ATP-dependent AMP-binding enzyme family. MenE subfamily.

It catalyses the reaction 2-succinylbenzoate + ATP + CoA = 2-succinylbenzoyl-CoA + AMP + diphosphate. It functions in the pathway quinol/quinone metabolism; 1,4-dihydroxy-2-naphthoate biosynthesis; 1,4-dihydroxy-2-naphthoate from chorismate: step 5/7. Its pathway is quinol/quinone metabolism; menaquinone biosynthesis. Its function is as follows. Converts 2-succinylbenzoate (OSB) to 2-succinylbenzoyl-CoA (OSB-CoA). The sequence is that of 2-succinylbenzoate--CoA ligase from Staphylococcus aureus (strain USA300 / TCH1516).